The following is an 81-amino-acid chain: Small ribosomal subunit protein bS16 (81 aa).

This sequence belongs to the bacterial ribosomal protein bS16 family.

The sequence is that of Small ribosomal subunit protein bS16 from Clostridium perfringens (strain ATCC 13124 / DSM 756 / JCM 1290 / NCIMB 6125 / NCTC 8237 / Type A).